We begin with the raw amino-acid sequence, 85 residues long: UPF0297 protein LBA0418 (85 aa).

Belongs to the UPF0297 family.

This Lactobacillus acidophilus (strain ATCC 700396 / NCK56 / N2 / NCFM) protein is UPF0297 protein LBA0418.